Reading from the N-terminus, the 419-residue chain is CinA-like protein (419 aa).

It belongs to the CinA family.

In Picosynechococcus sp. (strain ATCC 27264 / PCC 7002 / PR-6) (Agmenellum quadruplicatum), this protein is CinA-like protein.